Here is an 81-residue protein sequence, read N- to C-terminus: uncharacterized protein (81 aa).

The first 16 residues, 1 to 16, serve as a signal peptide directing secretion; that stretch reads MNRLTFYGLCLSGAVG. The disordered stretch occupies residues 55 to 81; that stretch reads TIDPHHNHHDDHHDSHGHGHGKIKGHH. The segment covering 57–71 has biased composition (basic and acidic residues); it reads DPHHNHHDDHHDSHG. Residues 72 to 81 show a composition bias toward basic residues; it reads HGHGKIKGHH.

The protein localises to the secreted. This is an uncharacterized protein from Dictyostelium discoideum (Social amoeba).